We begin with the raw amino-acid sequence, 392 residues long: uncharacterized protein (392 aa).

Positions Met-1–Gly-19 are cleaved as a signal peptide. Cys-20 is lipidated: N-palmitoyl cysteine. The S-diacylglycerol cysteine moiety is linked to residue Cys-20. The interval Ser-148–Glu-173 is disordered. Positions Ser-151 to Gly-160 are enriched in gly residues.

Belongs to the TP013X lipoprotein family.

The protein resides in the cell membrane. This is an uncharacterized protein from Treponema pallidum (strain Nichols).